An 81-amino-acid chain; its full sequence is MSKVDNIEQKVIKIIADNQGKKIEEISVDLRFAEDLGVDSLSTVEIMMEIEKEFGVDVPDEEATKIKKVADVVNYIKEHKS.

Residues 2–80 (SKVDNIEQKV…DVVNYIKEHK (79 aa)) enclose the Carrier domain. Position 40 is an O-(pantetheine 4'-phosphoryl)serine (S40).

The protein belongs to the acyl carrier protein (ACP) family. In terms of processing, 4'-phosphopantetheine is transferred from CoA to a specific serine of apo-ACP by AcpS. This modification is essential for activity because fatty acids are bound in thioester linkage to the sulfhydryl of the prosthetic group.

It localises to the cytoplasm. Its pathway is lipid metabolism; fatty acid biosynthesis. Carrier of the growing fatty acid chain in fatty acid biosynthesis. This is Acyl carrier protein from Rickettsia bellii (strain OSU 85-389).